A 230-amino-acid chain; its full sequence is Transmembrane protein 221 (230 aa).

4 consecutive transmembrane segments (helical) span residues 12 to 32 (AMTL…QLLF), 73 to 93 (ALAA…ALCG), 125 to 145 (LFCC…LLLF), and 147 to 167 (IEAG…LVAI). The interval 184-230 (RELSPPSFEDEPARPSEDSKSGCRAQPPQDEETETPIGAVTHQGSHF) is disordered. The segment covering 194–204 (EPARPSEDSKS) has biased composition (basic and acidic residues).

Its subcellular location is the membrane. This chain is Transmembrane protein 221 (Tmem221), found in Mus musculus (Mouse).